Reading from the N-terminus, the 287-residue chain is Undecaprenyl-diphosphatase (287 aa).

7 helical membrane passes run 50-70 (PGVS…IAYF), 97-117 (LGFA…GIKF), 131-151 (IPSI…AEQV), 160-180 (VVLG…LLPG), 206-226 (FLLG…DALA), 234-254 (LPLL…IDWL), and 264-284 (WLFV…WGVY).

Belongs to the UppP family.

The protein resides in the cell inner membrane. It catalyses the reaction di-trans,octa-cis-undecaprenyl diphosphate + H2O = di-trans,octa-cis-undecaprenyl phosphate + phosphate + H(+). Catalyzes the dephosphorylation of undecaprenyl diphosphate (UPP). Confers resistance to bacitracin. The sequence is that of Undecaprenyl-diphosphatase from Synechococcus sp. (strain CC9605).